The sequence spans 338 residues: Tagatose 1,6-diphosphate aldolase (338 aa).

This sequence belongs to the aldolase LacD family.

The catalysed reaction is D-tagatofuranose 1,6-bisphosphate = D-glyceraldehyde 3-phosphate + dihydroxyacetone phosphate. Its pathway is carbohydrate metabolism; D-tagatose 6-phosphate degradation; D-glyceraldehyde 3-phosphate and glycerone phosphate from D-tagatose 6-phosphate: step 2/2. This is Tagatose 1,6-diphosphate aldolase from Listeria monocytogenes serovar 1/2a (strain ATCC BAA-679 / EGD-e).